A 242-amino-acid chain; its full sequence is MTTVSMRDMLQAGVHFGHQTRYWNPKMKPFIFGARNGVHIINLEHTVPMFNEALAFISNVASKKGKVLFVGTKRAAGEAIKESALSCDQFYVDHRWLGGMLTNWKTVRQSIKRLKELESQSVDGTFDKLTKKEALMRTRELEKLEKSLGGIKNMGGLPDVLFVIGADHEHIAIKEANNLGIPVVAVVDTNSAPDGVNYIVPGNDDAMRAIRLYTSSVAAAAKAGRGQDLAVQAEQDGFVEAE.

Belongs to the universal ribosomal protein uS2 family.

In Shewanella baltica (strain OS223), this protein is Small ribosomal subunit protein uS2.